We begin with the raw amino-acid sequence, 282 residues long: 4-hydroxy-tetrahydrodipicolinate reductase (282 aa).

NAD(+) contacts are provided by residues 14 to 19 (GAMGRM) and 115 to 117 (GTT). His-171 acts as the Proton donor/acceptor in catalysis. His-172 provides a ligand contact to (S)-2,3,4,5-tetrahydrodipicolinate. The active-site Proton donor is Lys-175. Residue 181–182 (GT) coordinates (S)-2,3,4,5-tetrahydrodipicolinate.

This sequence belongs to the DapB family.

It localises to the cytoplasm. It catalyses the reaction (S)-2,3,4,5-tetrahydrodipicolinate + NAD(+) + H2O = (2S,4S)-4-hydroxy-2,3,4,5-tetrahydrodipicolinate + NADH + H(+). The catalysed reaction is (S)-2,3,4,5-tetrahydrodipicolinate + NADP(+) + H2O = (2S,4S)-4-hydroxy-2,3,4,5-tetrahydrodipicolinate + NADPH + H(+). Its pathway is amino-acid biosynthesis; L-lysine biosynthesis via DAP pathway; (S)-tetrahydrodipicolinate from L-aspartate: step 4/4. Functionally, catalyzes the conversion of 4-hydroxy-tetrahydrodipicolinate (HTPA) to tetrahydrodipicolinate. The chain is 4-hydroxy-tetrahydrodipicolinate reductase from Prochlorococcus marinus (strain NATL2A).